Consider the following 628-residue polypeptide: Biosynthetic arginine decarboxylase (628 aa).

Lys-99 is subject to N6-(pyridoxal phosphate)lysine. 279–289 serves as a coordination point for substrate; it reads VDVGGGLGIDY.

It belongs to the Orn/Lys/Arg decarboxylase class-II family. SpeA subfamily. The cofactor is Mg(2+). Pyridoxal 5'-phosphate serves as cofactor.

The catalysed reaction is L-arginine + H(+) = agmatine + CO2. Functionally, catalyzes the biosynthesis of agmatine from arginine. The sequence is that of Biosynthetic arginine decarboxylase from Xanthomonas axonopodis pv. citri (strain 306).